The following is a 148-amino-acid chain: Putative FAD-linked sulfhydryl oxidase 096R (148 aa).

The 103-residue stretch at 1-103 (MSIDPKLWGN…LAAKTVFQRY (103 aa)) folds into the ERV/ALR sulfhydryl oxidase domain. Cysteines 48 and 51 form a disulfide. The helical transmembrane segment at 122 to 142 (WSPWLTTALAVILVVVVAGIG) threads the bilayer.

Belongs to the IIV-6 347L family. FAD is required as a cofactor.

It is found in the membrane. It catalyses the reaction 2 R'C(R)SH + O2 = R'C(R)S-S(R)CR' + H2O2. Its function is as follows. FAD-dependent sulfhydryl oxidase that catalyzes disulfide bond formation. The polypeptide is Putative FAD-linked sulfhydryl oxidase 096R (Aedes vexans (Inland floodwater mosquito)).